Reading from the N-terminus, the 189-residue chain is MRLWTGLGNPEPGMSRHRHNIGFMAVDEIARRHGFSPWRKRFRGETSEGVIGGQKILLLKPMTYMNRSGDSVQQAAQFFKIAQDDITVFHDELDLAFGKLRIKRGGGAAGHNGLRSMDKCLPGPDYWRVRMGIGHPGHKDRVTGHVLGNFAKAEEPELERWLEAIADAAPLLAKKEHEAFMTKVALLAA.

The Proton acceptor role is filled by histidine 19. The tRNA site is built by tyrosine 64, asparagine 66, and asparagine 112.

Belongs to the PTH family. In terms of assembly, monomer.

The protein resides in the cytoplasm. It catalyses the reaction an N-acyl-L-alpha-aminoacyl-tRNA + H2O = an N-acyl-L-amino acid + a tRNA + H(+). Functionally, hydrolyzes ribosome-free peptidyl-tRNAs (with 1 or more amino acids incorporated), which drop off the ribosome during protein synthesis, or as a result of ribosome stalling. Catalyzes the release of premature peptidyl moieties from peptidyl-tRNA molecules trapped in stalled 50S ribosomal subunits, and thus maintains levels of free tRNAs and 50S ribosomes. The sequence is that of Peptidyl-tRNA hydrolase from Gluconobacter oxydans (strain 621H) (Gluconobacter suboxydans).